The primary structure comprises 603 residues: uncharacterized protein (603 aa).

Residues 496-513 (EEEDQEEDDTSDDDDQEK) show a composition bias toward acidic residues. Disordered stretches follow at residues 496–536 (EEED…GSLE) and 549–568 (AVAE…DTAQ). Over residues 517 to 533 (NPQNNIGSLTRTPSSPG) the composition is skewed to polar residues.

It belongs to the herpesviridae US22 family.

This is an uncharacterized protein from Human cytomegalovirus (strain AD169) (HHV-5).